We begin with the raw amino-acid sequence, 281 residues long: Transcription factor HES-1 (281 aa).

A disordered region spans residues 1–44 (MPADIMEKNSSSPVAATPASVNTTPDKPKTASEHRKSSKPIMEK). Over residues 10–21 (SSSPVAATPASV) the composition is skewed to low complexity. The span at 26–35 (DKPKTASEHR) shows a compositional bias: basic and acidic residues. In terms of domain architecture, bHLH spans 34–91 (HRKSSKPIMEKRRRARINESLSQLKTLILDALKKDSSRHSKLEKADILEMTVKHLRNL). An Orange domain is found at 110 to 143 (YRAGFSECMNEVTRFLSTCEGVNTEVRTRLLGHL). Disordered regions lie at residues 158–206 (QAHP…PCKL) and 255–281 (TSVGPNAVSPSSGSSLTADSMWRPWRN). Composition is skewed to pro residues over residues 164–174 (QAPPPPPPSGP) and 182–201 (FAPPPPLVPIPGGAAPPPGS). The segment covering 255 to 272 (TSVGPNAVSPSSGSSLTA) has biased composition (polar residues). The WRPW motif signature appears at 276–279 (WRPW).

Interacts with SIRT1. Interacts weakly with TLE2. Interacts with HES6. Transcription repression requires formation of a complex with a corepressor protein of the Groucho/TLE family. Interacts (via WPRW motif) with TLE1. Interacts with an FA complex, composed of FANCA, FANCF, FANCG and FANCL, but not of FANCC, nor FANCE. Present in all tissues examined but highest in epithelial cells and in mesoderm-derived tissues such as embryonal muscle cells.

It is found in the nucleus. Functionally, transcriptional repressor of genes that require a bHLH protein for their transcription. May act as a negative regulator of myogenesis by inhibiting the functions of MYOD1 and ASH1. Binds DNA on N-box motifs: 5'-CACNAG-3' with high affinity and on E-box motifs: 5'-CANNTG-3' with low affinity. May play a role in a functional FA core complex response to DNA cross-link damage, being required for the stability and nuclear localization of FA core complex proteins, as well as for FANCD2 monoubiquitination in response to DNA damage. This Rattus norvegicus (Rat) protein is Transcription factor HES-1 (Hes1).